The chain runs to 72 residues: SRY-related protein AES4 (72 aa).

A DNA-binding region (HMG box) is located at residues 1-69 (VKRPMNAFMV…KHMADYPDYK (69 aa)).

It is found in the nucleus. This is SRY-related protein AES4 from Alligator mississippiensis (American alligator).